We begin with the raw amino-acid sequence, 159 residues long: Ribosomal RNA large subunit methyltransferase H (159 aa).

S-adenosyl-L-methionine contacts are provided by residues leucine 76, glycine 108, and 127 to 132; that span reads FSKMTF.

This sequence belongs to the RNA methyltransferase RlmH family. In terms of assembly, homodimer.

The protein localises to the cytoplasm. The catalysed reaction is pseudouridine(1915) in 23S rRNA + S-adenosyl-L-methionine = N(3)-methylpseudouridine(1915) in 23S rRNA + S-adenosyl-L-homocysteine + H(+). In terms of biological role, specifically methylates the pseudouridine at position 1915 (m3Psi1915) in 23S rRNA. In Lachnospira eligens (strain ATCC 27750 / DSM 3376 / VPI C15-48 / C15-B4) (Eubacterium eligens), this protein is Ribosomal RNA large subunit methyltransferase H.